A 164-amino-acid chain; its full sequence is HTH-type transcriptional regulator IscR (164 aa).

An HTH rrf2-type domain is found at 2–131; it reads RLTSKGRYAV…SSISLEELVN (130 aa). The segment at residues 28–51 is a DNA-binding region (H-T-H motif); that stretch reads LADISERQGISLSYLEQLFSRLRK. [2Fe-2S] cluster contacts are provided by Cys92, Cys98, and Cys104. Positions 141-164 are disordered; that stretch reads RQDNDKRRAPNGRAQETINVNLRP. Positions 154–164 are enriched in polar residues; the sequence is AQETINVNLRP.

Requires [2Fe-2S] cluster as cofactor.

In terms of biological role, regulates the transcription of several operons and genes involved in the biogenesis of Fe-S clusters and Fe-S-containing proteins. The protein is HTH-type transcriptional regulator IscR of Photorhabdus laumondii subsp. laumondii (strain DSM 15139 / CIP 105565 / TT01) (Photorhabdus luminescens subsp. laumondii).